Consider the following 65-residue polypeptide: Large ribosomal subunit protein bL35 (65 aa).

Over residues 1 to 16 (MPKQKTHRASAKRFKR) the composition is skewed to basic residues. The disordered stretch occupies residues 1–20 (MPKQKTHRASAKRFKRTGSG).

It belongs to the bacterial ribosomal protein bL35 family.

The chain is Large ribosomal subunit protein bL35 from Streptococcus pyogenes serotype M1.